A 1217-amino-acid polypeptide reads, in one-letter code: ATP-dependent helicase/nuclease subunit A (1217 aa).

The 466-residue stretch at 10-475 (VIWTDAQWQS…MDLSQNFRSR (466 aa)) folds into the UvrD-like helicase ATP-binding domain. An ATP-binding site is contributed by 31–38 (AAAGSGKT). In terms of domain architecture, UvrD-like helicase C-terminal spans 491–786 (DEQVGEVNYD…RMMTIHSSKG (296 aa)).

It belongs to the helicase family. AddA subfamily. As to quaternary structure, heterodimer of AddA and AddB/RexB. The cofactor is Mg(2+).

It catalyses the reaction Couples ATP hydrolysis with the unwinding of duplex DNA by translocating in the 3'-5' direction.. The catalysed reaction is ATP + H2O = ADP + phosphate + H(+). Its function is as follows. The heterodimer acts as both an ATP-dependent DNA helicase and an ATP-dependent, dual-direction single-stranded exonuclease. Recognizes the chi site generating a DNA molecule suitable for the initiation of homologous recombination. The AddA nuclease domain is required for chi fragment generation; this subunit has the helicase and 3' -&gt; 5' nuclease activities. The polypeptide is ATP-dependent helicase/nuclease subunit A (Staphylococcus aureus (strain bovine RF122 / ET3-1)).